The primary structure comprises 499 residues: Lysine--tRNA ligase (499 aa).

Residues Glu-408 and Glu-415 each contribute to the Mg(2+) site.

It belongs to the class-II aminoacyl-tRNA synthetase family. As to quaternary structure, homodimer. Requires Mg(2+) as cofactor.

The protein resides in the cytoplasm. The catalysed reaction is tRNA(Lys) + L-lysine + ATP = L-lysyl-tRNA(Lys) + AMP + diphosphate. This is Lysine--tRNA ligase from Thermoanaerobacter pseudethanolicus (strain ATCC 33223 / 39E) (Clostridium thermohydrosulfuricum).